The following is a 375-amino-acid chain: Xylose transport system permease protein XylH (375 aa).

The next 10 membrane-spanning stretches (helical) occupy residues 9 to 29 (LQVY…SVAT), 52 to 72 (LAIG…VGSL), 85 to 105 (VWWG…GLIF), 118 to 138 (VPSF…LIGL), 159 to 179 (LSDI…VLWG), 199 to 219 (DFTK…LLND), 220 to 240 (YRGI…GLFL), 271 to 291 (KLII…ILSA), 319 to 339 (LAGG…IASL), and 348 to 368 (VPTF…VWID).

This sequence belongs to the binding-protein-dependent transport system permease family. AraH/RbsC subfamily.

Its subcellular location is the cell inner membrane. In terms of biological role, part of the binding-protein-dependent transport system for D-xylose. Probably responsible for the translocation of the substrate across the membrane. The protein is Xylose transport system permease protein XylH (xylH) of Haemophilus influenzae (strain ATCC 51907 / DSM 11121 / KW20 / Rd).